The sequence spans 130 residues: Ribosome biogenesis inhibitor MINAS-60 (130 aa).

The interval 61-130 (SRVRRIPTRP…RRRRPVTSSC (70 aa)) is disordered. Residues 109 to 130 (KGRRRRRRRMRRRRRRPVTSSC) show a composition bias toward basic residues.

In terms of assembly, interacts with 60S ribosome assembly factors GTPBP4 and MRTO4.

The protein resides in the nucleus. It is found in the nucleolus. Acts as a late-stage inhibitor of pre-60S ribosome assembly by preventing pre-60S ribosome export from nucleus. This is Ribosome biogenesis inhibitor MINAS-60 from Homo sapiens (Human).